We begin with the raw amino-acid sequence, 89 residues long: Barrier-to-autointegration factor (89 aa).

Methionine 1 bears the N-acetylmethionine mark. The residue at position 2 (threonine 2) is an N-acetylthreonine; in Barrier-to-autointegration factor, N-terminally processed. 2 positions are modified to phosphothreonine; by VRK1 and VRK2: threonine 2 and threonine 3. Residue serine 4 is modified to Phosphoserine; by VRK1 and VRK2. In terms of domain architecture, HhH spans 20–35; that stretch reads VGSLAGIGDVLSKRLE.

This sequence belongs to the BAF family. As to quaternary structure, homodimer. Heterodimerizes with BANF2. Interacts with ANKLE2/LEM4, leading to decreased phosphorylation by VRK1 and promoting dephosphorylation by protein phosphatase 2A (PP2A). Binds non-specifically to double-stranded DNA, and is found as a hexamer or dodecamer upon DNA binding. Binds to LEM domain-containing nuclear proteins such as LEMD3/MAN1, TMPO/LAP2 and EMD (emerin). Interacts with ANKLE1 (via LEM domain); the interaction may favor BANF1 dimerization. Interacts with CRX and LMNA (lamin-A). Binds linker histone H1.1 and core histones H3. Interacts with LEMD2 (via LEM domain). Interacts with PARP1; interaction takes place in response to oxidative DNA damage. Ser-4 is the major site of phosphorylation as compared to Thr-2 and Thr-3. Phosphorylation on Thr-2; Thr-3 and Ser-4 disrupts its ability to bind DNA and reduces its ability to bind LEM domain-containing proteins. Non phosphorylated BAF seems to enhance binding between EMD and LMNA. Dephosphorylated by protein phosphatase 2A (PP2A) following interaction with ANKLE2/LEM4 during mitotic exit, leading to mitotic nuclear envelope reassembly.

It localises to the nucleus. Its subcellular location is the chromosome. The protein localises to the nucleus envelope. It is found in the cytoplasm. In terms of biological role, non-specific DNA-binding protein that plays key roles in mitotic nuclear reassembly, chromatin organization, DNA damage response, gene expression and intrinsic immunity against foreign DNA. Contains two non-specific double-stranded DNA (dsDNA)-binding sites which promote DNA cross-bridging. Plays a key role in nuclear membrane reformation at the end of mitosis by driving formation of a single nucleus in a spindle-independent manner. Transiently cross-bridges anaphase chromosomes via its ability to bridge distant DNA sites, leading to the formation of a dense chromatin network at the chromosome ensemble surface that limits membranes to the surface. Also acts as a negative regulator of innate immune activation by restricting CGAS activity toward self-DNA upon acute loss of nuclear membrane integrity. Outcompetes CGAS for DNA-binding, thereby preventing CGAS activation and subsequent damaging autoinflammatory responses. Also involved in DNA damage response: interacts with PARP1 in response to oxidative stress, thereby inhibiting the ADP-ribosyltransferase activity of PARP1. Involved in the recognition of exogenous dsDNA in the cytosol: associates with exogenous dsDNA immediately after its appearance in the cytosol at endosome breakdown and is required to avoid autophagy. The protein is Barrier-to-autointegration factor of Mus musculus (Mouse).